Reading from the N-terminus, the 258-residue chain is Dihydroorotate dehydrogenase B (NAD(+)), electron transfer subunit (258 aa).

The FAD-binding FR-type domain maps to 2 to 100 (ILKENLTVVS…LGPQGNGFDL (99 aa)). FAD-binding positions include 51 to 54 (RPIS), 68 to 70 (IYR), and 75 to 76 (GT). Cys-220, Cys-225, Cys-228, and Cys-244 together coordinate [2Fe-2S] cluster.

The protein belongs to the PyrK family. As to quaternary structure, heterotetramer of 2 PyrK and 2 PyrD type B subunits. Requires [2Fe-2S] cluster as cofactor. It depends on FAD as a cofactor.

The protein operates within pyrimidine metabolism; UMP biosynthesis via de novo pathway; orotate from (S)-dihydroorotate (NAD(+) route): step 1/1. In terms of biological role, responsible for channeling the electrons from the oxidation of dihydroorotate from the FMN redox center in the PyrD type B subunit to the ultimate electron acceptor NAD(+). The chain is Dihydroorotate dehydrogenase B (NAD(+)), electron transfer subunit from Streptococcus mutans serotype c (strain ATCC 700610 / UA159).